A 211-amino-acid chain; its full sequence is Redox-sensing transcriptional repressor Rex (211 aa).

The H-T-H motif DNA-binding region spans 18 to 57 (LYYRFLKNLHASGKQRVSSAELSEAVKVDSATIRRDFSYF). 92–97 (GVGNLG) contributes to the NAD(+) binding site.

Belongs to the transcriptional regulatory Rex family. In terms of assembly, homodimer.

The protein localises to the cytoplasm. Modulates transcription in response to changes in cellular NADH/NAD(+) redox state. This Anoxybacillus flavithermus (strain DSM 21510 / WK1) protein is Redox-sensing transcriptional repressor Rex.